Reading from the N-terminus, the 200-residue chain is Recombination protein RecR (200 aa).

The C4-type zinc finger occupies C58 to C75. The Toprim domain maps to S82–P177.

The protein belongs to the RecR family.

Functionally, may play a role in DNA repair. It seems to be involved in an RecBC-independent recombinational process of DNA repair. It may act with RecF and RecO. The chain is Recombination protein RecR from Chlamydia trachomatis serovar L2 (strain ATCC VR-902B / DSM 19102 / 434/Bu).